The chain runs to 116 residues: Endocuticle structural glycoprotein ABD-4 (116 aa).

Position 1 is a pyrrolidone carboxylic acid (Q1). The Chitin-binding type R&amp;R domain occupies 20–92 (DGSYQWNYET…PQGAHFPTPP (73 aa)). The segment at 78–97 (ENGFVPQGAHFPTPPPIPPA) is disordered. A glycan (O-linked (GalNAc) threonine; in ADB-4A, ABD-4B and ABD-4C) is linked at T90. T107 carries an O-linked (GalNAc) threonine; in ADB-4A and ABD-4B glycan. T111 is a glycosylation site (O-linked (GalNAc) threonine; in ADB-4A). At P116 the chain carries Proline amide.

3 variants exists that arise from a sequential glycosylation with N-acetylgalactosamine at three (ABD-4A), two (ABD-4B) or one (ABD-4C) threonine residues.

In terms of biological role, component of the soft endocuticle of migratory locust. The polypeptide is Endocuticle structural glycoprotein ABD-4 (Locusta migratoria (Migratory locust)).